Here is a 143-residue protein sequence, read N- to C-terminus: Nucleoside diphosphate kinase (143 aa).

Positions 11, 59, 87, 93, 104, and 114 each coordinate ATP. The active-site Pros-phosphohistidine intermediate is His117.

Belongs to the NDK family. Homotetramer. The cofactor is Mg(2+).

The protein localises to the cytoplasm. The catalysed reaction is a 2'-deoxyribonucleoside 5'-diphosphate + ATP = a 2'-deoxyribonucleoside 5'-triphosphate + ADP. The enzyme catalyses a ribonucleoside 5'-diphosphate + ATP = a ribonucleoside 5'-triphosphate + ADP. In terms of biological role, major role in the synthesis of nucleoside triphosphates other than ATP. The ATP gamma phosphate is transferred to the NDP beta phosphate via a ping-pong mechanism, using a phosphorylated active-site intermediate. This Thioalkalivibrio sulfidiphilus (strain HL-EbGR7) protein is Nucleoside diphosphate kinase.